The sequence spans 114 residues: MNITLTKRQQEFLLLNGWLQLQCGHAERACILLDALLMLNPEHLAGRRCRLVALLNNNQGERAEKEAQWLISHDPLQAGNWLCLSRAQQLNGDLDKARHAYQHYLELKDHNESL.

Binds to YscX.

It is found in the cytoplasm. Functionally, required for Yop secretion. Functions probably as a chaperone which stabilizes YscX within the cell, before its secretion. The protein is Chaperone protein YscY (yscY) of Yersinia enterocolitica serotype O:8 / biotype 1B (strain NCTC 13174 / 8081).